The chain runs to 283 residues: tRNA-cytidine(32) 2-sulfurtransferase (283 aa).

The short motif at 37 to 42 (SGGKDS) is the PP-loop motif element. Residues Cys112, Cys115, and Cys203 each coordinate [4Fe-4S] cluster.

This sequence belongs to the TtcA family. In terms of assembly, homodimer. The cofactor is Mg(2+). Requires [4Fe-4S] cluster as cofactor.

Its subcellular location is the cytoplasm. The enzyme catalyses cytidine(32) in tRNA + S-sulfanyl-L-cysteinyl-[cysteine desulfurase] + AH2 + ATP = 2-thiocytidine(32) in tRNA + L-cysteinyl-[cysteine desulfurase] + A + AMP + diphosphate + H(+). It participates in tRNA modification. Its function is as follows. Catalyzes the ATP-dependent 2-thiolation of cytidine in position 32 of tRNA, to form 2-thiocytidine (s(2)C32). The sulfur atoms are provided by the cysteine/cysteine desulfurase (IscS) system. The polypeptide is tRNA-cytidine(32) 2-sulfurtransferase (Legionella pneumophila subsp. pneumophila (strain Philadelphia 1 / ATCC 33152 / DSM 7513)).